Reading from the N-terminus, the 370-residue chain is Probable G-protein coupled receptor 85 (370 aa).

Residues M1 to T25 are Extracellular-facing. N3 is a glycosylation site (N-linked (GlcNAc...) asparagine). Residues S26–V46 form a helical membrane-spanning segment. Residues K47–Y57 lie on the Cytoplasmic side of the membrane. Residues F58–F78 form a helical membrane-spanning segment. At N79 to V96 the chain is on the extracellular side. N-linked (GlcNAc...) asparagine glycosylation occurs at N83. C94 and C172 are oxidised to a cystine. A helical membrane pass occupies residues I97–V117. The Cytoplasmic portion of the chain corresponds to T118 to T137. Residues C138–L158 traverse the membrane as a helical segment. The Extracellular portion of the chain corresponds to D159–M188. An N-linked (GlcNAc...) asparagine glycan is attached at N182. A helical transmembrane segment spans residues L189–V209. Residues H210–M286 are Cytoplasmic-facing. The helical transmembrane segment at F287 to W307 threads the bilayer. The Extracellular segment spans residues R308 to G313. Residues P314–I334 traverse the membrane as a helical segment. The Cytoplasmic segment spans residues N335 to I370.

The protein belongs to the G-protein coupled receptor 1 family. Interacts with DLG4 and DLG3. Highly expressed in brain and testis. Lower levels in small intestine, placenta and spleen. In brain regions, detected in all regions tested, but somewhat lower levels in the corpus callosum, medulla and spinal cord.

The protein localises to the cell membrane. Its subcellular location is the endoplasmic reticulum. Functionally, orphan receptor. The sequence is that of Probable G-protein coupled receptor 85 (GPR85) from Homo sapiens (Human).